Consider the following 287-residue polypeptide: Diaminopimelate epimerase (287 aa).

Positions 11, 44, and 64 each coordinate substrate. The Proton donor role is filled by C73. Substrate is bound by residues 74–75 (GN), N157, N190, and 208–209 (ER). The active-site Proton acceptor is the C217. Residue 218-219 (GT) participates in substrate binding.

The protein belongs to the diaminopimelate epimerase family. Homodimer.

The protein localises to the cytoplasm. The enzyme catalyses (2S,6S)-2,6-diaminopimelate = meso-2,6-diaminopimelate. Its pathway is amino-acid biosynthesis; L-lysine biosynthesis via DAP pathway; DL-2,6-diaminopimelate from LL-2,6-diaminopimelate: step 1/1. Functionally, catalyzes the stereoinversion of LL-2,6-diaminopimelate (L,L-DAP) to meso-diaminopimelate (meso-DAP), a precursor of L-lysine and an essential component of the bacterial peptidoglycan. In Halorhodospira halophila (strain DSM 244 / SL1) (Ectothiorhodospira halophila (strain DSM 244 / SL1)), this protein is Diaminopimelate epimerase.